A 35-amino-acid polypeptide reads, in one-letter code: Photosystem II reaction center protein T (35 aa).

A helical transmembrane segment spans residues 3 to 23 (ALVYTFLLVSTLGIIFFAIFF).

It belongs to the PsbT family. As to quaternary structure, PSII is composed of 1 copy each of membrane proteins PsbA, PsbB, PsbC, PsbD, PsbE, PsbF, PsbH, PsbI, PsbJ, PsbK, PsbL, PsbM, PsbT, PsbY, PsbZ, Psb30/Ycf12, at least 3 peripheral proteins of the oxygen-evolving complex and a large number of cofactors. It forms dimeric complexes.

It is found in the plastid. The protein resides in the chloroplast thylakoid membrane. Functionally, found at the monomer-monomer interface of the photosystem II (PS II) dimer, plays a role in assembly and dimerization of PSII. PSII is a light-driven water plastoquinone oxidoreductase, using light energy to abstract electrons from H(2)O, generating a proton gradient subsequently used for ATP formation. This is Photosystem II reaction center protein T from Cabomba caroliniana (Carolina fanwort).